The chain runs to 297 residues: 4-hydroxy-tetrahydrodipicolinate synthase (297 aa).

Thr-47 serves as a coordination point for pyruvate. Catalysis depends on Tyr-136, which acts as the Proton donor/acceptor. Catalysis depends on Lys-165, which acts as the Schiff-base intermediate with substrate. Ile-206 contributes to the pyruvate binding site.

The protein belongs to the DapA family. As to quaternary structure, homotetramer; dimer of dimers.

The protein localises to the cytoplasm. It catalyses the reaction L-aspartate 4-semialdehyde + pyruvate = (2S,4S)-4-hydroxy-2,3,4,5-tetrahydrodipicolinate + H2O + H(+). The protein operates within amino-acid biosynthesis; L-lysine biosynthesis via DAP pathway; (S)-tetrahydrodipicolinate from L-aspartate: step 3/4. In terms of biological role, catalyzes the condensation of (S)-aspartate-beta-semialdehyde [(S)-ASA] and pyruvate to 4-hydroxy-tetrahydrodipicolinate (HTPA). This Campylobacter concisus (strain 13826) protein is 4-hydroxy-tetrahydrodipicolinate synthase.